The chain runs to 132 residues: Transcription antitermination protein NusB (132 aa).

Belongs to the NusB family.

In terms of biological role, involved in transcription antitermination. Required for transcription of ribosomal RNA (rRNA) genes. Binds specifically to the boxA antiterminator sequence of the ribosomal RNA (rrn) operons. This chain is Transcription antitermination protein NusB, found in Campylobacter jejuni subsp. jejuni serotype O:6 (strain 81116 / NCTC 11828).